Reading from the N-terminus, the 502-residue chain is Lysine--tRNA ligase (502 aa).

Positions 411 and 418 each coordinate Mg(2+).

It belongs to the class-II aminoacyl-tRNA synthetase family. In terms of assembly, homodimer. It depends on Mg(2+) as a cofactor.

The protein resides in the cytoplasm. The enzyme catalyses tRNA(Lys) + L-lysine + ATP = L-lysyl-tRNA(Lys) + AMP + diphosphate. The chain is Lysine--tRNA ligase from Chromohalobacter salexigens (strain ATCC BAA-138 / DSM 3043 / CIP 106854 / NCIMB 13768 / 1H11).